A 258-amino-acid chain; its full sequence is Regulatory protein RecX (258 aa).

This sequence belongs to the RecX family.

Its subcellular location is the cytoplasm. In terms of biological role, modulates RecA activity. In Streptococcus pneumoniae serotype 19F (strain G54), this protein is Regulatory protein RecX.